A 273-amino-acid chain; its full sequence is Rhamnulose-1-phosphate aldolase (273 aa).

Glutamate 117 is an active-site residue. Positions 140, 142, and 211 each coordinate Zn(2+).

It belongs to the aldolase class II family. RhaD subfamily. Zn(2+) is required as a cofactor.

It is found in the cytoplasm. It catalyses the reaction L-rhamnulose 1-phosphate = (S)-lactaldehyde + dihydroxyacetone phosphate. Its pathway is carbohydrate degradation; L-rhamnose degradation; glycerone phosphate from L-rhamnose: step 3/3. In terms of biological role, catalyzes the reversible cleavage of L-rhamnulose-1-phosphate to dihydroxyacetone phosphate (DHAP) and L-lactaldehyde. The polypeptide is Rhamnulose-1-phosphate aldolase (Listeria monocytogenes serotype 4b (strain F2365)).